Here is a 258-residue protein sequence, read N- to C-terminus: Snake venom serine protease 3 (258 aa).

An N-terminal signal peptide occupies residues 1-18; that stretch reads MVLIRVLANLLILQLSYA. Positions 19–24 are excised as a propeptide; the sequence is QKSSEL. The Peptidase S1 domain occupies 25-249; it reads VIGGDECNIN…YTDWIQSIIA (225 aa). Cystine bridges form between Cys31-Cys163, Cys50-Cys66, Cys98-Cys256, Cys142-Cys210, Cys174-Cys189, and Cys200-Cys225. Residue Asn44 is glycosylated (N-linked (GlcNAc...) asparagine). The active-site Charge relay system is His65. N-linked (GlcNAc...) asparagine glycosylation is present at Asn103. Asp110 functions as the Charge relay system in the catalytic mechanism. Asn117, Asn121, and Asn154 each carry an N-linked (GlcNAc...) asparagine glycan. The active-site Charge relay system is the Ser204. An N-linked (GlcNAc...) asparagine glycan is attached at Asn251.

It belongs to the peptidase S1 family. Snake venom subfamily. Monomer. In terms of tissue distribution, expressed by the venom gland.

It is found in the secreted. In terms of biological role, snake venom serine protease that may act in the hemostasis system of the prey. The chain is Snake venom serine protease 3 (TLG3) from Craspedocephalus gramineus (Bamboo pit viper).